The primary structure comprises 1226 residues: DNA-directed RNA polymerase subunit beta (1226 aa).

This sequence belongs to the RNA polymerase beta chain family. As to quaternary structure, the RNAP catalytic core consists of 2 alpha, 1 beta, 1 beta' and 1 omega subunit. When a sigma factor is associated with the core the holoenzyme is formed, which can initiate transcription.

It catalyses the reaction RNA(n) + a ribonucleoside 5'-triphosphate = RNA(n+1) + diphosphate. DNA-dependent RNA polymerase catalyzes the transcription of DNA into RNA using the four ribonucleoside triphosphates as substrates. In Leptospira interrogans serogroup Icterohaemorrhagiae serovar Lai (strain 56601), this protein is DNA-directed RNA polymerase subunit beta.